The primary structure comprises 208 residues: Protein-L-isoaspartate O-methyltransferase (208 aa).

Residue S59 is part of the active site.

This sequence belongs to the methyltransferase superfamily. L-isoaspartyl/D-aspartyl protein methyltransferase family.

The protein resides in the cytoplasm. The catalysed reaction is [protein]-L-isoaspartate + S-adenosyl-L-methionine = [protein]-L-isoaspartate alpha-methyl ester + S-adenosyl-L-homocysteine. Its function is as follows. Catalyzes the methyl esterification of L-isoaspartyl residues in peptides and proteins that result from spontaneous decomposition of normal L-aspartyl and L-asparaginyl residues. It plays a role in the repair and/or degradation of damaged proteins. The polypeptide is Protein-L-isoaspartate O-methyltransferase (Pectobacterium carotovorum subsp. carotovorum (strain PC1)).